Consider the following 299-residue polypeptide: Protein-methionine-sulfoxide reductase catalytic subunit MsrP (299 aa).

The tat-type signal signal peptide spans 1–44 (MAHRWINDLTPADITPRGAWMNRRQVMAGMAGAGLAAFAGSAQA). Mo-molybdopterin contacts are provided by residues asparagine 59, 62 to 63 (YE), cysteine 117, threonine 152, asparagine 200, arginine 205, and 216 to 218 (SIK).

This sequence belongs to the MsrP family. In terms of assembly, heterodimer of a catalytic subunit (MsrP) and a heme-binding subunit (MsrQ). It depends on Mo-molybdopterin as a cofactor. Post-translationally, predicted to be exported by the Tat system. The position of the signal peptide cleavage has not been experimentally proven.

It is found in the periplasm. The enzyme catalyses L-methionyl-[protein] + a quinone + H2O = L-methionyl-(S)-S-oxide-[protein] + a quinol. It catalyses the reaction L-methionyl-[protein] + a quinone + H2O = L-methionyl-(R)-S-oxide-[protein] + a quinol. Part of the MsrPQ system that repairs oxidized periplasmic proteins containing methionine sulfoxide residues (Met-O), using respiratory chain electrons. Thus protects these proteins from oxidative-stress damage caused by reactive species of oxygen and chlorine generated by the host defense mechanisms. MsrPQ is essential for the maintenance of envelope integrity under bleach stress, rescuing a wide series of structurally unrelated periplasmic proteins from methionine oxidation. The catalytic subunit MsrP is non-stereospecific, being able to reduce both (R-) and (S-) diastereoisomers of methionine sulfoxide. The protein is Protein-methionine-sulfoxide reductase catalytic subunit MsrP of Ruegeria pomeroyi (strain ATCC 700808 / DSM 15171 / DSS-3) (Silicibacter pomeroyi).